The sequence spans 226 residues: Phosphoglycolate phosphatase (226 aa).

Asp-9 (nucleophile) is an active-site residue. Residues Asp-9 and Asp-11 each contribute to the Mg(2+) site. Lys-150 is a substrate binding site. Mg(2+) is bound by residues Asp-173 and Asp-177.

Belongs to the archaeal SPP-like hydrolase family. Requires Mg(2+) as cofactor.

It carries out the reaction 2-phosphoglycolate + H2O = glycolate + phosphate. Functionally, catalyzes the dephosphorylation of 2-phosphoglycolate. The chain is Phosphoglycolate phosphatase from Methanosarcina mazei (strain ATCC BAA-159 / DSM 3647 / Goe1 / Go1 / JCM 11833 / OCM 88) (Methanosarcina frisia).